The primary structure comprises 146 residues: Allograft inflammatory factor 1 (146 aa).

Serine 1 is subject to N-acetylserine. The residue at position 10 (lysine 10) is an N6-acetyllysine. Serine 38 is subject to Phosphoserine. Positions 44 to 79 (RKLEAFKQKYMEFDLNGNGDIDIMSLKRMLEKLGVP) constitute an EF-hand 1 domain. Residues aspartate 57, asparagine 59, asparagine 61, aspartate 63, and threonine 99 each coordinate Ca(2+). In terms of domain architecture, EF-hand 2; degenerate spans 81–115 (THLELKKLIKEVSSGSGETFSYSIFLKMMLGKRSA). The disordered stretch occupies residues 127–146 (AREQEKPTGPPAKKAISELP).

Homodimer (Potential). Monomer. Interacts with LCP1. In terms of tissue distribution, microglial cells in the central nervous system and dendritic cells and macrophages in several organs.

Its subcellular location is the cytoplasm. It localises to the cytoskeleton. It is found in the cell projection. The protein resides in the ruffle membrane. The protein localises to the phagocytic cup. Functionally, actin-binding protein that enhances membrane ruffling and RAC activation. Enhances the actin-bundling activity of LCP1. Binds calcium. Plays a role in RAC signaling and in phagocytosis. May play a role in macrophage activation and function. Promotes the proliferation of vascular smooth muscle cells and of T-lymphocytes. Enhances lymphocyte migration. Plays a role in vascular inflammation. Has a dual influence on glucose-induced insulin secretion: inhibition at low concentration and stimulation at high concentrations. In Sus scrofa (Pig), this protein is Allograft inflammatory factor 1 (AIF1).